A 250-amino-acid chain; its full sequence is Maleate isomerase (250 aa).

Substrate-binding positions include N15, 80-82, Y137, and N167; that span reads CLV. Catalysis depends on C80, which acts as the Nucleophile. Residue C80 is modified to S-(2-succinyl)cysteine. C198 serves as the catalytic Proton donor. Position 199–200 (199–200) interacts with substrate; it reads VQ.

This sequence belongs to the maleate isomerase family. Homodimer.

It catalyses the reaction maleate = fumarate. It participates in cofactor degradation; nicotinate degradation. Functionally, catalyzes cis-trans isomerization of the C2-C3 double bond in maleate to yield fumarate in the aerobic nicotinate degradation pathway. This chain is Maleate isomerase, found in Pseudomonas putida (strain ATCC 47054 / DSM 6125 / CFBP 8728 / NCIMB 11950 / KT2440).